Reading from the N-terminus, the 153-residue chain is Peritrophin-1 (153 aa).

An N-terminal signal peptide occupies residues 1–17 (MKVSASLVLLLAAAVLA). 2 consecutive Chitin-binding type-2 domains span residues 18 to 79 (DDRC…QCAP) and 92 to 153 (SPNC…QCEE). Cystine bridges form between cysteine 56-cysteine 69 and cysteine 130-cysteine 143. Asparagine 63 carries an N-linked (GlcNAc...) asparagine glycan.

Glycosylated. In terms of tissue distribution, adult peritrophic membrane.

Its function is as follows. Binds chitin but not cellulose. May be involved in the spatial organization of PM. In Anopheles gambiae (African malaria mosquito), this protein is Peritrophin-1 (Aper1).